Reading from the N-terminus, the 108-residue chain is Thiosulfate sulfurtransferase GlpE (108 aa).

One can recognise a Rhodanese domain in the interval 17–105 (KDGSAALVDI…WARQYPQDVE (89 aa)). Residue Cys65 is the Cysteine persulfide intermediate of the active site.

Belongs to the GlpE family.

It is found in the cytoplasm. The enzyme catalyses thiosulfate + hydrogen cyanide = thiocyanate + sulfite + 2 H(+). It catalyses the reaction thiosulfate + [thioredoxin]-dithiol = [thioredoxin]-disulfide + hydrogen sulfide + sulfite + 2 H(+). Its function is as follows. Transferase that catalyzes the transfer of sulfur from thiosulfate to thiophilic acceptors such as cyanide or dithiols. May function in a CysM-independent thiosulfate assimilation pathway by catalyzing the conversion of thiosulfate to sulfite, which can then be used for L-cysteine biosynthesis. The chain is Thiosulfate sulfurtransferase GlpE from Serratia proteamaculans (strain 568).